Here is a 1747-residue protein sequence, read N- to C-terminus: E3 ubiquitin-protein ligase listerin (1747 aa).

The interval 1-24 is disordered; that stretch reads MGGKTKQAPRTKNNAKPSSSSRTA. Positions 8 to 24 are enriched in polar residues; it reads APRTKNNAKPSSSSRTA. 5 HEAT repeats span residues 65–102, 106–144, 346–383, 424–461, and 508–547; these read AAIS…QSDV, KNIL…KCKK, NIRK…KVTQ, NAYF…NVLE, and KFWI…ANPS. Ser-566 is modified (phosphoserine). HEAT repeat units lie at residues 612–653, 664–711, 789–825, 952–989, 1005–1042, 1053–1090, 1129–1166, 1216–1258, 1269–1307, 1330–1363, 1364–1400, and 1500–1539; these read SRYI…LLGQ, EIVF…CAEA, SFIA…EHRP, LSRN…DPED, KWNE…ELVL, GNSS…FCPQ, KLSQ…NFEG, VEFI…SIAQ, VAVY…LFAK, FQAC…NSNI, TLDH…HFVA, and ENFL…QKDR. The segment at 1697–1744 adopts an RING-type zinc-finger fold; that stretch reads CYVCYTVIHQETCQLPKLTCKTCKKKFHGPCLYKWFTTSSKSTCPICR.

It belongs to the LTN1 family. As to quaternary structure, component of the ribosome quality control complex (RQC), composed of at least the E3 ubiquitin ligase l(3)76BDr/LTN1 and Clbn/NEMF. The complex probably also contains TCF25 as well as TER94/VCP and its ubiquitin-binding cofactors. RQC forms a stable complex with 60S ribosomal subunits.

The protein resides in the cytoplasm. Its subcellular location is the cytosol. It catalyses the reaction S-ubiquitinyl-[E2 ubiquitin-conjugating enzyme]-L-cysteine + [acceptor protein]-L-lysine = [E2 ubiquitin-conjugating enzyme]-L-cysteine + N(6)-ubiquitinyl-[acceptor protein]-L-lysine.. The protein operates within protein modification; protein ubiquitination. Functionally, E3 ubiquitin-protein ligase component of the ribosome quality control complex (RQC), a ribosome-associated complex that mediates ubiquitination and extraction of incompletely synthesized nascent chains for proteasomal degradation. Ubiquitination leads to TER94/VCP recruitment for extraction and degradation of the incomplete translation product. This chain is E3 ubiquitin-protein ligase listerin, found in Drosophila melanogaster (Fruit fly).